Consider the following 86-residue polypeptide: Kappa-theraphotoxin-Cg1a 3 (86 aa).

An N-terminal signal peptide occupies residues 1–21 (MKVSVLITLAVLGVMFVWASA). Positions 22 to 50 (AELEERGSDQRDSPAWLKSMERIFRSEER) are excised as a propeptide. 3 cysteine pairs are disulfide-bonded: C52/C66, C59/C71, and C65/C78. F84 is modified (phenylalanine amide).

This sequence belongs to the neurotoxin 10 (Hwtx-1) family. 28 (Jztx-11) subfamily. Expressed by the venom gland.

Its subcellular location is the secreted. This toxin acts as a voltage-dependent gating-modifier. It inhibits the sodium conductance (IC(50)=124 nM) and slows the fast inactivation (EC(50)=1180 nM) of Nav1.5/SCN5A. It significantly shifts the activation to more depolarized voltages and decreases the deactivation of Nav1.5 currents upon extreme depolarization, but only slightly affects voltage-dependence of steady-state inactivation. In addition, this toxin causes an approximately five-fold decrease in the rate of recovery from inactivation and an approximately 1.9-fold reduction in the closed-state inactivation rate. This toxin integrates the functions of site 3 toxins (alpha-scorpion toxins) with site 4 toxins (beta-scorpion and spider toxins) by targeting multiple sites on Nav1.5. Also shows inhibition of voltage-gated potassium channels (5 uM completely inhibits Kv2.1/KCNB1, whereas 5 uM moderately inhibits Kv4.2/KCND2 Kv4.1/KCND1 channels). This is Kappa-theraphotoxin-Cg1a 3 from Chilobrachys guangxiensis (Chinese earth tiger tarantula).